We begin with the raw amino-acid sequence, 484 residues long: UDP-N-acetylmuramoyl-L-alanyl-D-glutamate--L-lysine ligase (484 aa).

Ser-43 lines the UDP-N-acetyl-alpha-D-muramoyl-L-alanyl-D-glutamate pocket. 119 to 125 lines the ATP pocket; that stretch reads GTKGKTT. UDP-N-acetyl-alpha-D-muramoyl-L-alanyl-D-glutamate contacts are provided by residues 161–162, Ser-188, and Arg-196; that span reads TT. Lys-230 carries the post-translational modification N6-carboxylysine. The L-lysine recognition motif signature appears at 405-408; sequence DDPN.

It belongs to the MurCDEF family. MurE subfamily. In terms of processing, carboxylation is probably crucial for Mg(2+) binding and, consequently, for the gamma-phosphate positioning of ATP.

It is found in the cytoplasm. The catalysed reaction is UDP-N-acetyl-alpha-D-muramoyl-L-alanyl-D-glutamate + L-lysine + ATP = UDP-N-acetyl-alpha-D-muramoyl-L-alanyl-gamma-D-glutamyl-L-lysine + ADP + phosphate + H(+). It functions in the pathway cell wall biogenesis; peptidoglycan biosynthesis. Functionally, catalyzes the addition of L-lysine to the nucleotide precursor UDP-N-acetylmuramoyl-L-alanyl-D-glutamate (UMAG) in the biosynthesis of bacterial cell-wall peptidoglycan. This chain is UDP-N-acetylmuramoyl-L-alanyl-D-glutamate--L-lysine ligase, found in Streptococcus agalactiae serotype V (strain ATCC BAA-611 / 2603 V/R).